Consider the following 346-residue polypeptide: Oxidoreductase calI (346 aa).

The segment at 11–33 (VSTPQGRGDGRPTADQVLRDQDP) is disordered. The span at 18-32 (GDGRPTADQVLRDQD) shows a compositional bias: basic and acidic residues. NADP(+) contacts are provided by leucine 52, lysine 76, aspartate 100, and asparagine 128. Residue serine 181 is the Proton donor of the active site. NADP(+)-binding residues include tyrosine 208, lysine 212, and isoleucine 241. Tyrosine 208 serves as the catalytic Proton acceptor. Residue lysine 212 is the Lowers pKa of active site Tyr of the active site.

This sequence belongs to the short-chain dehydrogenases/reductases (SDR) family.

The protein operates within secondary metabolite biosynthesis. Oxidoreductase; part of the gene cluster that mediates the biosynthesis of calbistrin A and related compounds. Calbistrin A is a secondary metabolite with an interesting structure that was recently found to have bioactivity against leukemia cells. It consists of two polyketides linked by an ester bond: a bicyclic decalin containing polyketide and a linear 12 carbon dioic acid structure. The polyketide synthase calA is probably responsible for forming the decalin moiety. Because calA lacks a designated enoylreductase (ER) domain, the required activity is provided by the trans-enoyl reductase calK. Following release from the PKS, calF then probably catalyzes the oxidation and the subsequent Diels Alder cycloisomerization that lead to the formation of the decalin moiety. The decalin polyketide backbone includes two C-methyl groups, at C7 and C11 in backbone, of which the C7 position is probably methylated by the methyltransferase domain of calA. A candidate for adding the methyl group at C11, if not done by CalA, is the cluster methyltransferase calH. Several additional tailoring enzymes within the cluster could be involved in the modification of the decalin polyketide product. Those include the 3 cytochrome P450 monooxygenases CalE, CalG and CalL, of which one might be responsible for the introduction of the extra hydroxyl group attached to the backbone of the decalin moiety, at position C9 in the backbone, that allows for attachment of the linear moiety. One tailoring enzyme activity that is expected to be involved in biosynthesis of calbistrin is an acyltransferase for connecting the two polyketide synthase products, and which could be performed by the cluster acyltransferase calJ. The enzyme responsible for the biosynthesis of the linear moiety, probably a second PKS, has not been identified yet. The chain is Oxidoreductase calI from Penicillium decumbens.